We begin with the raw amino-acid sequence, 269 residues long: Cytochrome c oxidase subunit 3 (269 aa).

7 helical membrane-spanning segments follow: residues 19 to 39 (PWPFFLSVVLFFNCLAATLYL), 44 to 64 (HSSVFFGISFLGLLATMYLWF), 87 to 107 (IGFMLFLISETFLFASIFWAF), 135 to 155 (LEVPLLNTVILLTSGASLTYA), 170 to 190 (GLYMTIALSFLFLGGQAYEYW), 205 to 225 (FYFATGLHGIHIIVGTILLLA), and 247 to 267 (IYYWHFCDVVWLFLYLTIYIW).

It belongs to the cytochrome c oxidase subunit 3 family. As to quaternary structure, component of the cytochrome c oxidase (complex IV, CIV), a multisubunit enzyme composed of a catalytic core of 3 subunits and several supernumerary subunits. The complex exists as a monomer or a dimer and forms supercomplexes (SCs) in the inner mitochondrial membrane with ubiquinol-cytochrome c oxidoreductase (cytochrome b-c1 complex, complex III, CIII).

Its subcellular location is the mitochondrion inner membrane. It carries out the reaction 4 Fe(II)-[cytochrome c] + O2 + 8 H(+)(in) = 4 Fe(III)-[cytochrome c] + 2 H2O + 4 H(+)(out). Its function is as follows. Component of the cytochrome c oxidase, the last enzyme in the mitochondrial electron transport chain which drives oxidative phosphorylation. The respiratory chain contains 3 multisubunit complexes succinate dehydrogenase (complex II, CII), ubiquinol-cytochrome c oxidoreductase (cytochrome b-c1 complex, complex III, CIII) and cytochrome c oxidase (complex IV, CIV), that cooperate to transfer electrons derived from NADH and succinate to molecular oxygen, creating an electrochemical gradient over the inner membrane that drives transmembrane transport and the ATP synthase. Cytochrome c oxidase is the component of the respiratory chain that catalyzes the reduction of oxygen to water. Electrons originating from reduced cytochrome c in the intermembrane space (IMS) are transferred via the dinuclear copper A center (CU(A)) of subunit 2 and heme A of subunit 1 to the active site in subunit 1, a binuclear center (BNC) formed by heme A3 and copper B (CU(B)). The BNC reduces molecular oxygen to 2 water molecules using 4 electrons from cytochrome c in the IMS and 4 protons from the mitochondrial matrix. This is Cytochrome c oxidase subunit 3 (cox3) from Schizosaccharomyces pombe (strain 972 / ATCC 24843) (Fission yeast).